Consider the following 112-residue polypeptide: Small ribosomal subunit protein bS6 (112 aa).

It belongs to the bacterial ribosomal protein bS6 family.

In terms of biological role, binds together with bS18 to 16S ribosomal RNA. The protein is Small ribosomal subunit protein bS6 (rpsF) of Chlamydia muridarum (strain MoPn / Nigg).